A 161-amino-acid chain; its full sequence is Phosphopantetheine adenylyltransferase (161 aa).

Ser9 provides a ligand contact to substrate. ATP-binding positions include 9 to 10 and His17; that span reads SF. Positions 41, 74, and 88 each coordinate substrate. ATP-binding positions include 89–91, Glu99, and 124–130; these read GVR and NSFVASS.

This sequence belongs to the bacterial CoaD family. Homohexamer. Mg(2+) serves as cofactor.

It localises to the cytoplasm. The catalysed reaction is (R)-4'-phosphopantetheine + ATP + H(+) = 3'-dephospho-CoA + diphosphate. Its pathway is cofactor biosynthesis; coenzyme A biosynthesis; CoA from (R)-pantothenate: step 4/5. Functionally, reversibly transfers an adenylyl group from ATP to 4'-phosphopantetheine, yielding dephospho-CoA (dPCoA) and pyrophosphate. The polypeptide is Phosphopantetheine adenylyltransferase (Lactobacillus acidophilus (strain ATCC 700396 / NCK56 / N2 / NCFM)).